The following is a 1047-amino-acid chain: Probable alpha-mannosidase At5g66150 (1047 aa).

The N-terminal stretch at 1–27 is a signal peptide; it reads MEKPGMSLLKGSLCVIVFLLLLSLVES. Residues His56, Asp58, and Asp178 each contribute to the Zn(2+) site. N-linked (GlcNAc...) asparagine glycosylation is found at Asn280, Asn287, and Asn345. His419 lines the Zn(2+) pocket. 2 disulfides stabilise this stretch: Cys455-Cys465 and Cys476-Cys484. Residues Asn480, Asn508, Asn541, Asn605, Asn606, Asn668, Asn780, and Asn857 are each glycosylated (N-linked (GlcNAc...) asparagine). Cys855 and Cys860 are joined by a disulfide.

It belongs to the glycosyl hydrolase 38 family. As to quaternary structure, homodimer. Requires Zn(2+) as cofactor.

The protein resides in the vacuole. It catalyses the reaction Hydrolysis of terminal, non-reducing alpha-D-mannose residues in alpha-D-mannosides.. Its function is as follows. Liberates mannose from p-nitrophenyl-alpha-D-mannoside in vitro. In Arabidopsis thaliana (Mouse-ear cress), this protein is Probable alpha-mannosidase At5g66150.